Here is a 945-residue protein sequence, read N- to C-terminus: UvrABC system protein A (945 aa).

Residue 31 to 38 (GLSGSGKS) coordinates ATP. Residues 254-281 (CPVCGHSISELEPKLFSFNNPAGACPTC) form a C4-type zinc finger. ABC transporter domains follow at residues 310 to 587 (WDRR…PDSL) and 607 to 937 (RDKK…HFLK). Position 640-647 (640-647 (GVSGSGKS)) interacts with ATP. Residues 740 to 766 (CEACQGDGVIKVEMHFLPDIYVPCDVC) form a C4-type zinc finger.

Belongs to the ABC transporter superfamily. UvrA family. In terms of assembly, forms a heterotetramer with UvrB during the search for lesions.

It is found in the cytoplasm. In terms of biological role, the UvrABC repair system catalyzes the recognition and processing of DNA lesions. UvrA is an ATPase and a DNA-binding protein. A damage recognition complex composed of 2 UvrA and 2 UvrB subunits scans DNA for abnormalities. When the presence of a lesion has been verified by UvrB, the UvrA molecules dissociate. The polypeptide is UvrABC system protein A (Pseudomonas aeruginosa (strain ATCC 15692 / DSM 22644 / CIP 104116 / JCM 14847 / LMG 12228 / 1C / PRS 101 / PAO1)).